Reading from the N-terminus, the 425-residue chain is Serine--tRNA ligase (425 aa).

Thr233 to Glu235 lines the L-serine pocket. Arg264 to Glu266 is a binding site for ATP. Glu287 provides a ligand contact to L-serine. Glu351 to Ser354 lines the ATP pocket. An L-serine-binding site is contributed by Ser385.

This sequence belongs to the class-II aminoacyl-tRNA synthetase family. Type-1 seryl-tRNA synthetase subfamily. Homodimer. The tRNA molecule binds across the dimer.

The protein localises to the cytoplasm. The enzyme catalyses tRNA(Ser) + L-serine + ATP = L-seryl-tRNA(Ser) + AMP + diphosphate + H(+). The catalysed reaction is tRNA(Sec) + L-serine + ATP = L-seryl-tRNA(Sec) + AMP + diphosphate + H(+). Its pathway is aminoacyl-tRNA biosynthesis; selenocysteinyl-tRNA(Sec) biosynthesis; L-seryl-tRNA(Sec) from L-serine and tRNA(Sec): step 1/1. In terms of biological role, catalyzes the attachment of serine to tRNA(Ser). Is also able to aminoacylate tRNA(Sec) with serine, to form the misacylated tRNA L-seryl-tRNA(Sec), which will be further converted into selenocysteinyl-tRNA(Sec). This is Serine--tRNA ligase from Parasynechococcus marenigrum (strain WH8102).